We begin with the raw amino-acid sequence, 385 residues long: Prepilin peptidase EppA (385 aa).

10 helical membrane passes run 1–21, 29–49, 58–78, 80–100, 104–124, 126–146, 166–186, 187–207, 231–251, and 358–378; these read MILM…CFYA, GIIP…LNGA, WIFI…YILW, MVAW…LLPF, LVSY…PFPL, VIIN…FFII, TSMV…LITD, FLPF…TMVI, FELT…IQLI, and PAIF…MILF.

Belongs to the peptidase A24 family.

The protein localises to the cell membrane. Peptidase that processes the N-terminus of prepilins. In Methanothermobacter thermautotrophicus (strain ATCC 29096 / DSM 1053 / JCM 10044 / NBRC 100330 / Delta H) (Methanobacterium thermoautotrophicum), this protein is Prepilin peptidase EppA.